We begin with the raw amino-acid sequence, 807 residues long: Sucrose synthase 2 (807 aa).

The tract at residues 274–752 is GT-B glycosyltransferase; that stretch reads MVFNVVILSP…GLKRIYERYT (479 aa).

The protein belongs to the glycosyltransferase 1 family. Plant sucrose synthase subfamily. Detected in the whole plant but at lower levels. Predominantly expressed in developing siliques. Also detected in the root tip. Detected in the embryo, endosperm and seed coat (at the protein level).

The protein resides in the cytoplasm. It is found in the plastid membrane. The catalysed reaction is an NDP-alpha-D-glucose + D-fructose = a ribonucleoside 5'-diphosphate + sucrose + H(+). In terms of biological role, sucrose-cleaving enzyme that provides UDP-glucose and fructose for various metabolic pathways. Modulates metabolic homeostasis and directs carbon towards starch synthesis in developing seeds. The protein is Sucrose synthase 2 (SUS2) of Arabidopsis thaliana (Mouse-ear cress).